The primary structure comprises 113 residues: Hydrogenase maturation factor HypA (113 aa).

Residue histidine 2 coordinates Ni(2+). Cysteine 73, cysteine 76, cysteine 89, and cysteine 92 together coordinate Zn(2+).

Belongs to the HypA/HybF family.

Its function is as follows. Involved in the maturation of [NiFe] hydrogenases. Required for nickel insertion into the metal center of the hydrogenase. The sequence is that of Hydrogenase maturation factor HypA from Legionella pneumophila subsp. pneumophila (strain Philadelphia 1 / ATCC 33152 / DSM 7513).